A 348-amino-acid chain; its full sequence is Phenylalanine--tRNA ligase alpha subunit (348 aa).

Residue glutamate 262 participates in Mg(2+) binding.

The protein belongs to the class-II aminoacyl-tRNA synthetase family. Phe-tRNA synthetase alpha subunit type 1 subfamily. Tetramer of two alpha and two beta subunits. Requires Mg(2+) as cofactor.

Its subcellular location is the cytoplasm. The catalysed reaction is tRNA(Phe) + L-phenylalanine + ATP = L-phenylalanyl-tRNA(Phe) + AMP + diphosphate + H(+). This Streptococcus pneumoniae (strain 70585) protein is Phenylalanine--tRNA ligase alpha subunit.